A 230-amino-acid chain; its full sequence is uncharacterized protein (230 aa).

Catalysis depends on charge relay system residues S124 and H158.

This sequence belongs to the peptidase S51 family.

This is an uncharacterized protein from Bacillus subtilis (strain 168).